The chain runs to 232 residues: Phosphatidylserine decarboxylase proenzyme (232 aa).

Residue serine 190 is the Schiff-base intermediate with substrate; via pyruvic acid of the active site. Serine 190 carries the post-translational modification Pyruvic acid (Ser); by autocatalysis.

This sequence belongs to the phosphatidylserine decarboxylase family. PSD-A subfamily. As to quaternary structure, heterodimer of a large membrane-associated beta subunit and a small pyruvoyl-containing alpha subunit. The cofactor is pyruvate. Post-translationally, is synthesized initially as an inactive proenzyme. Formation of the active enzyme involves a self-maturation process in which the active site pyruvoyl group is generated from an internal serine residue via an autocatalytic post-translational modification. Two non-identical subunits are generated from the proenzyme in this reaction, and the pyruvate is formed at the N-terminus of the alpha chain, which is derived from the carboxyl end of the proenzyme. The post-translation cleavage follows an unusual pathway, termed non-hydrolytic serinolysis, in which the side chain hydroxyl group of the serine supplies its oxygen atom to form the C-terminus of the beta chain, while the remainder of the serine residue undergoes an oxidative deamination to produce ammonia and the pyruvoyl prosthetic group on the alpha chain.

It localises to the cell membrane. It carries out the reaction a 1,2-diacyl-sn-glycero-3-phospho-L-serine + H(+) = a 1,2-diacyl-sn-glycero-3-phosphoethanolamine + CO2. It functions in the pathway phospholipid metabolism; phosphatidylethanolamine biosynthesis; phosphatidylethanolamine from CDP-diacylglycerol: step 2/2. Catalyzes the formation of phosphatidylethanolamine (PtdEtn) from phosphatidylserine (PtdSer). The chain is Phosphatidylserine decarboxylase proenzyme from Rhizobium etli (strain CIAT 652).